Reading from the N-terminus, the 259-residue chain is Small ribosomal subunit protein uS2 (259 aa).

Belongs to the universal ribosomal protein uS2 family.

This is Small ribosomal subunit protein uS2 from Dinoroseobacter shibae (strain DSM 16493 / NCIMB 14021 / DFL 12).